A 267-amino-acid polypeptide reads, in one-letter code: Cell division protein FtsQ (267 aa).

The Cytoplasmic portion of the chain corresponds to 1-32 (MRKKTSSNKKKQTKKTNNISLRRKLGLMYKKA). A helical transmembrane segment spans residues 33–53 (ILGLKIALIIFVCLFVFTKYF). Residues 54–267 (AGIKTYLTTN…DKNKYYIEKY (214 aa)) lie on the Periplasmic side of the membrane. The region spanning 73-141 (FKLENVIIEG…NTVYIKLFER (69 aa)) is the POTRA domain.

This sequence belongs to the FtsQ/DivIB family. FtsQ subfamily.

The protein localises to the cell inner membrane. In terms of biological role, essential cell division protein. The polypeptide is Cell division protein FtsQ (Rickettsia conorii (strain ATCC VR-613 / Malish 7)).